The primary structure comprises 538 residues: Putative outer membrane porin BglH (538 aa).

The first 25 residues, 1–25 (MFRQNLITSAILLMAPLAFSAQSLA), serve as a signal peptide directing secretion. The tract at residues 52–82 (KDEEKKKYTPATVNRSVSTNDQGYAANPFPT) is disordered. Polar residues predominate over residues 62–73 (ATVNRSVSTNDQ).

This sequence belongs to the porin LamB (TC 1.B.3) family.

It is found in the cell outer membrane. May be a sugar porin with a broad carbohydrate specificity. This chain is Putative outer membrane porin BglH (bglH), found in Shigella flexneri.